The sequence spans 419 residues: MPRAPALLTNDARHQFTCCLCLHVRTGTIIFGITQIIIQLVFISFLFLMTFNPRLIPEDNHGNTDPSEDKIRFYVFSTLFRLVPAVSDIHESLTLPSPGTRNVNGNKLYLGHNVESETNFNYDIPPGYKDDVLVDVNNMSPSLVSYTQKNERGSHEVKIKHFSPYIAVCVTTFSLAFCCFMVHGAITKQPTHLLPFFFIQVFDLIICLIHILGFMSSTSDLRLMIHTKTGPIYIKSTGFTFIILSISCMMLAFKAYCLGMVWDCYKYLMLNRRGNLLDDWYSDQWGHLSTFWSLLRAGRNRGNNSIGNSGSPNEPNTRPRPEPITYDPANDLPKYEDILKIPANAYAPPPYYCSNINGNVNTTEASAVTTNTSNSATAANTTTTTTNTGTTTSVISTLTTTNKDDTQINSAPSNAHSSC.

The Cytoplasmic portion of the chain corresponds to 1–28 (MPRAPALLTNDARHQFTCCLCLHVRTGT). Residues 29–49 (IIFGITQIIIQLVFISFLFLM) traverse the membrane as a helical segment. The Extracellular segment spans residues 50 to 165 (TFNPRLIPED…EVKIKHFSPY (116 aa)). The chain crosses the membrane as a helical span at residues 166–186 (IAVCVTTFSLAFCCFMVHGAI). Residues 187–193 (TKQPTHL) are Cytoplasmic-facing. The helical transmembrane segment at 194-214 (LPFFFIQVFDLIICLIHILGF) threads the bilayer. The Extracellular segment spans residues 215-240 (MSSTSDLRLMIHTKTGPIYIKSTGFT). The chain crosses the membrane as a helical span at residues 241–261 (FIILSISCMMLAFKAYCLGMV). Topologically, residues 262–419 (WDCYKYLMLN…SAPSNAHSSC (158 aa)) are cytoplasmic. Residues 303–316 (NNSIGNSGSPNEPN) show a composition bias toward low complexity. A disordered region spans residues 303 to 328 (NNSIGNSGSPNEPNTRPRPEPITYDP).

In terms of assembly, interacts (via N-terminal extracellular domain) with human C2a. Phosphorylated on tyrosine residues.

It is found in the cell membrane. Its function is as follows. Cell surface receptor that binds to human complement C2a protein. This results in inhibition of the classical and lectin pathways of complement activation, probably due to interference with binding of C2a to C4b and interference with cleavage by C1 or MASP2 such that C3 convertase cannot be formed. This infers resistance to complement-mediated cell lysis, allowing parasite survival and infection. The chain is Tetraspanning orphan receptor from Schistosoma mansoni (Blood fluke).